Here is a 142-residue protein sequence, read N- to C-terminus: Hemoglobin subunit zeta (142 aa).

Position 2 is an N-acetylserine (S2). The 141-residue stretch at 2–142 folds into the Globin domain; that stretch reads SLTRTERTII…VSGVLTEKYR (141 aa). T29 bears the Phosphothreonine mark. Position 53 is a phosphoserine (S53). Residue H59 participates in heme b binding. Phosphoserine occurs at positions 73 and 82. Position 88 (H88) interacts with heme b.

It belongs to the globin family. Heterotetramer of two zeta chains and beta-type chains.

The zeta chain is an alpha-type chain of mammalian embryonic hemoglobin. This is Hemoglobin subunit zeta (HBZ1) from Capra hircus (Goat).